The following is a 355-amino-acid chain: MIPSVLLVTLLLLSWTSAEKDLKVRVARSTNDETNLHWVKCGGSVPDGAVSIQNTYVSPARTEYVCKSNCEAGYYSTKDSKCHYPFGRVEQTTSVCEILVNRDNFELLEWKEGYAGSLPANAVSTCKTNRIYVGKGAYGLGKIEPAHHCLYYGWNGAETWTKTYQALTVNKDVIEQTMKDVKYQTEGVTVIQGKPEVMRKSTVNNKQCKEVTKTVTLSKDISTEERWDVTNSVTFGVTTTVTAGIPDVASASLAVSMEARRDFAHGASKTESQSYMVTVSVPVPPKQSCTVSMVAQVNKADVPFTATLIRTYRGGKKTQTTTKGVYRTTQVAETHADVEQCTIIGDEKDCPKASK.

A signal peptide spans 1-18 (MIPSVLLVTLLLLSWTSA). The propeptide occupies 19-27 (EKDLKVRVA).

This sequence belongs to the natterin family. Contains 4 disulfide bonds. In terms of tissue distribution, expressed by the venom gland.

Its subcellular location is the secreted. Its activity is regulated as follows. Inhibited by tissue-kallikrein inhibitor TKI and trasylol. Plasma kallikrein inhibitor PKSI527 and classical inhibitors of serine-, metallo-, thiol- or aspartate-peptidases evokes a minor inhibition of the peptide digestion. Its function is as follows. Shows nociceptive, edema-inducing and kininogenase activity with release of kallidin from low molecular weight kininogen. The cleavage occurs at Met-Lys bonds. The protein is Natterin-1 of Thalassophryne nattereri (Copper Joe toadfish).